A 68-amino-acid polypeptide reads, in one-letter code: Large ribosomal subunit protein uL29 (68 aa).

The protein belongs to the universal ribosomal protein uL29 family.

This Bradyrhizobium sp. (strain BTAi1 / ATCC BAA-1182) protein is Large ribosomal subunit protein uL29.